The following is a 178-amino-acid chain: Ribosome maturation factor RimP (178 aa).

The protein belongs to the RimP family.

Its subcellular location is the cytoplasm. In terms of biological role, required for maturation of 30S ribosomal subunits. The protein is Ribosome maturation factor RimP of Streptococcus pyogenes serotype M18 (strain MGAS8232).